A 289-amino-acid chain; its full sequence is Elongation factor Ts (289 aa).

An involved in Mg(2+) ion dislocation from EF-Tu region spans residues 82–85 (TDFV).

Belongs to the EF-Ts family.

It localises to the cytoplasm. Its function is as follows. Associates with the EF-Tu.GDP complex and induces the exchange of GDP to GTP. It remains bound to the aminoacyl-tRNA.EF-Tu.GTP complex up to the GTP hydrolysis stage on the ribosome. This is Elongation factor Ts from Marinobacter nauticus (strain ATCC 700491 / DSM 11845 / VT8) (Marinobacter aquaeolei).